An 89-amino-acid chain; its full sequence is Large ribosomal subunit protein eL34 (89 aa).

The interval 1-29 (MSAPRFRNGTFKRTLKRVPGGRKVEHYKK) is disordered. Residues 13-29 (RTLKRVPGGRKVEHYKK) are compositionally biased toward basic residues.

It belongs to the eukaryotic ribosomal protein eL34 family.

The protein is Large ribosomal subunit protein eL34 of Methanosphaera stadtmanae (strain ATCC 43021 / DSM 3091 / JCM 11832 / MCB-3).